We begin with the raw amino-acid sequence, 127 residues long: Glycine cleavage system H protein (127 aa).

The 82-residue stretch at 24–105 (AALVGITDFA…YGEGWLVKIR (82 aa)) folds into the Lipoyl-binding domain. An N6-lipoyllysine modification is found at K65.

It belongs to the GcvH family. The glycine cleavage system is composed of four proteins: P, T, L and H. (R)-lipoate is required as a cofactor.

Its function is as follows. The glycine cleavage system catalyzes the degradation of glycine. The H protein shuttles the methylamine group of glycine from the P protein to the T protein. The polypeptide is Glycine cleavage system H protein (Chlorobium limicola (strain DSM 245 / NBRC 103803 / 6330)).